We begin with the raw amino-acid sequence, 729 residues long: Solute carrier family 15 member 2 (729 aa).

The segment at 1-35 is disordered; the sequence is MNPFQKNESKETLFSPVSTEEMLPRPPSPPKKSPP. Over 1 to 57 the chain is Cytoplasmic; it reads MNPFQKNESKETLFSPVSTEEMLPRPPSPPKKSPPKIFGSSYPVSIAFIVVNEFCER. S9 carries the post-translational modification Phosphoserine. Phosphothreonine is present on T12. At S28 the chain carries Phosphoserine. The chain crosses the membrane as a helical span at residues 58–78; the sequence is FSYYGMKAVLTLYFLYFLHWN. Residues 79–87 lie on the Extracellular side of the membrane; it reads EDTSTSVYH. A helical membrane pass occupies residues 88 to 108; sequence AFSSLCYFTPILGAAIADSWL. At 109–113 the chain is on the cytoplasmic side; sequence GKFKT. Residues 114-134 form a helical membrane-spanning segment; sequence IIYLSLVYVLGHVFKSLGAIP. The Extracellular segment spans residues 135–139; that stretch reads ILGGK. A helical transmembrane segment spans residues 140-160; sequence MLHTILSLVGLSLIALGTGGI. The Cytoplasmic segment spans residues 161–183; sequence KPCVAAFGGDQFEEEHAEARTRY. A helical membrane pass occupies residues 184–204; it reads FSVFYLAINAGSLISTFITPM. At 205–217 the chain is on the extracellular side; it reads LRGDVKCFGQDCY. The helical transmembrane segment at 218 to 238 threads the bilayer; that stretch reads ALAFGVPGLLMVLALVVFAMG. At 239–295 the chain is on the cytoplasmic side; the sequence is SKMYRKPPPEGNIVAQVIKCIWFALCNRFRNRSGDLPKRQHWLDWAAEKYPKHLIAD. Residues 296-316 form a helical membrane-spanning segment; that stretch reads VKALTRVLFLYIPLPMFWALL. The Extracellular portion of the chain corresponds to 317–343; that stretch reads DQQGSRWTLQANKMNGDLGFFVLQPDQ. Residues 344-364 traverse the membrane as a helical segment; it reads MQVLNPFLVLIFIPLFDLVIY. Topologically, residues 365–380 are cytoplasmic; the sequence is RLISKCRINFSSLRKM. A helical transmembrane segment spans residues 381-401; it reads AVGMILACLAFAVAALVETKI. The Extracellular segment spans residues 402-611; that stretch reads NGMIHPQPAS…PVNKLSIAWQ (210 aa). The interval 402 to 611 is extracellular domain (ECD); it reads NGMIHPQPAS…PVNKLSIAWQ (210 aa). N-linked (GlcNAc...) asparagine glycosylation is found at N435, N448, N528, and N587. The helical transmembrane segment at 612-632 threads the bilayer; the sequence is LPQYVLVTAAEVMFSVTGLEF. Topologically, residues 633–643 are cytoplasmic; that stretch reads SYSQAPSSMKS. Residues 644–664 traverse the membrane as a helical segment; sequence VLQAAWLLTVAVGNIIVLVVA. Topologically, residues 665–674 are extracellular; the sequence is QFSGLAQWAE. A helical transmembrane segment spans residues 675 to 695; it reads FVLFSCLLLVVCLIFSVMAYY. Residues 696–729 are Cytoplasmic-facing; that stretch reads YVPLKSEDTREATDKQIPAVQGNMINLETKNTRL.

This sequence belongs to the major facilitator superfamily. Proton-dependent oligopeptide transporter (POT/PTR) (TC 2.A.17) family. In terms of assembly, interacts (via extracellular domain region) with trypsin. As to expression, strongly expressed in kidney cortex and medulla. Also detected in brain, lung and spleen. Expressed in choroid plexus.

The protein resides in the apical cell membrane. The protein localises to the cytoplasmic vesicle. It is found in the phagosome membrane. It localises to the cell membrane. The catalysed reaction is a dipeptide(out) + 2 H(+)(out) = a dipeptide(in) + 2 H(+)(in). The enzyme catalyses glycyl-L-leucine(out) + 2 H(+)(out) = glycyl-L-leucine(in) + 2 H(+)(in). It carries out the reaction glycyl-L-lysine(out) + 2 H(+)(out) = glycyl-L-lysine(in) + 2 H(+)(in). It catalyses the reaction glycyl-L-glutamate(out) + 3 H(+)(out) = glycyl-L-glutamate(in) + 3 H(+)(in). The catalysed reaction is L-alanyl-L-alanine(out) + 2 H(+)(out) = L-alanyl-L-alanine(in) + 2 H(+)(in). The enzyme catalyses an L-amino acid tripeptide(out) + 2 H(+)(out) = an L-amino acid tripeptide(in) + 2 H(+)(in). It carries out the reaction N-acetyl-D-muramoyl-L-alanyl-D-isoglutamine(out) + 3 H(+)(out) = N-acetyl-D-muramoyl-L-alanyl-D-isoglutamine(in) + 3 H(+)(in). It catalyses the reaction carnosine(out) + 2 H(+)(out) = carnosine(in) + 2 H(+)(in). In terms of biological role, proton-coupled amino-acid transporter that transports oligopeptides of 2 to 4 amino acids with a preference for dipeptides. Transports neutral and anionic dipeptides with a proton to peptide stoichiometry of 2:1 or 3:1. In kidney, involved in the absorption of circulating di- and tripeptides from the glomerular filtrate. Can also transport beta-lactam antibiotics, such as the aminocephalosporin cefadroxil, and other antiviral and anticancer drugs. Transports the dipeptide-like aminopeptidase inhibitor bestatin. Also able to transport carnosine. Involved in innate immunity by promoting the detection of microbial pathogens by NOD-like receptors (NLRs). Mediates transport of bacterial peptidoglycans across the plasma membrane or, in macrophages, the phagosome membrane: catalyzes the transport of certain bacterial peptidoglycans, such as muramyl dipeptide (MDP), the NOD2 ligand. The chain is Solute carrier family 15 member 2 from Rattus norvegicus (Rat).